Reading from the N-terminus, the 295-residue chain is Proline iminopeptidase (295 aa).

The region spanning 29-279 (PLLLLHGGPG…GCGHMPFVQE (251 aa)) is the AB hydrolase-1 domain. The active-site Nucleophile is the S107. D246 is a catalytic residue. H273 functions as the Proton donor in the catalytic mechanism.

Belongs to the peptidase S33 family.

It is found in the cell envelope. It catalyses the reaction Release of N-terminal proline from a peptide.. Its function is as follows. Releases the N-terminal proline from various substrates. This Lactobacillus delbrueckii subsp. bulgaricus (strain ATCC 11842 / DSM 20081 / BCRC 10696 / JCM 1002 / NBRC 13953 / NCIMB 11778 / NCTC 12712 / WDCM 00102 / Lb 14) protein is Proline iminopeptidase.